A 327-amino-acid polypeptide reads, in one-letter code: Phenylalanine--tRNA ligase alpha subunit (327 aa).

Residue E252 coordinates Mg(2+).

It belongs to the class-II aminoacyl-tRNA synthetase family. Phe-tRNA synthetase alpha subunit type 1 subfamily. Tetramer of two alpha and two beta subunits. It depends on Mg(2+) as a cofactor.

It localises to the cytoplasm. The enzyme catalyses tRNA(Phe) + L-phenylalanine + ATP = L-phenylalanyl-tRNA(Phe) + AMP + diphosphate + H(+). In Salmonella choleraesuis (strain SC-B67), this protein is Phenylalanine--tRNA ligase alpha subunit.